The sequence spans 442 residues: C4-dicarboxylate transport protein (442 aa).

A run of 9 helical transmembrane segments spans residues 13-33, 49-69, 81-101, 149-169, 193-213, 227-247, 312-332, 336-356, and 357-377; these read VLYFQVLTAVVIGVLLGHFYP, GIKMLIAPIIFCTVVLGIAGM, LALLYFEIVSTIALMVGLVVV, AFAKGEILQVLFIAILFGFAL, MIAIIMKFAPIGAFGAMAFTI, LMGSFYLTCLLFVFIVLGIIA, IYLTMAAVFIAQATNTPMTLL, TLLAVLLLTSKGAAGVTGSGF, and IVLAATLSAVGDVPVAGLAII.

Belongs to the dicarboxylate/amino acid:cation symporter (DAACS) (TC 2.A.23) family.

The protein resides in the cell membrane. Its function is as follows. Responsible for the transport of dicarboxylates such as succinate, fumarate, and malate across the membrane. The chain is C4-dicarboxylate transport protein from Polynucleobacter asymbioticus (strain DSM 18221 / CIP 109841 / QLW-P1DMWA-1) (Polynucleobacter necessarius subsp. asymbioticus).